Reading from the N-terminus, the 510-residue chain is UDP-N-acetylmuramoylalanine--D-glutamate ligase (510 aa).

138–144 (GTNGKTT) is an ATP binding site. Positions 294–316 (FDEPAPAPRRKKDAPPPTRAGGR) are disordered.

This sequence belongs to the MurCDEF family.

It is found in the cytoplasm. It catalyses the reaction UDP-N-acetyl-alpha-D-muramoyl-L-alanine + D-glutamate + ATP = UDP-N-acetyl-alpha-D-muramoyl-L-alanyl-D-glutamate + ADP + phosphate + H(+). It participates in cell wall biogenesis; peptidoglycan biosynthesis. Functionally, cell wall formation. Catalyzes the addition of glutamate to the nucleotide precursor UDP-N-acetylmuramoyl-L-alanine (UMA). This is UDP-N-acetylmuramoylalanine--D-glutamate ligase from Bordetella bronchiseptica (strain ATCC BAA-588 / NCTC 13252 / RB50) (Alcaligenes bronchisepticus).